The primary structure comprises 426 residues: Phosphomethylpyrimidine synthase (426 aa).

Substrate-binding positions include asparagine 66, methionine 95, tyrosine 124, histidine 163, serine 185–glycine 187, aspartate 226–arginine 229, and glutamate 265. Histidine 269 serves as a coordination point for Zn(2+). Position 292 (tyrosine 292) interacts with substrate. Residue histidine 333 coordinates Zn(2+). [4Fe-4S] cluster is bound by residues cysteine 407, cysteine 410, and cysteine 414.

This sequence belongs to the ThiC family. The cofactor is [4Fe-4S] cluster.

The catalysed reaction is 5-amino-1-(5-phospho-beta-D-ribosyl)imidazole + S-adenosyl-L-methionine = 4-amino-2-methyl-5-(phosphooxymethyl)pyrimidine + CO + 5'-deoxyadenosine + formate + L-methionine + 3 H(+). Its pathway is cofactor biosynthesis; thiamine diphosphate biosynthesis. Functionally, catalyzes the synthesis of the hydroxymethylpyrimidine phosphate (HMP-P) moiety of thiamine from aminoimidazole ribotide (AIR) in a radical S-adenosyl-L-methionine (SAM)-dependent reaction. This is Phosphomethylpyrimidine synthase from Thermococcus gammatolerans (strain DSM 15229 / JCM 11827 / EJ3).